A 427-amino-acid polypeptide reads, in one-letter code: Kynureninase (427 aa).

Pyridoxal 5'-phosphate contacts are provided by residues threonine 104, threonine 105, 132-135 (FPSD), aspartate 213, histidine 216, and tyrosine 238. Lysine 239 carries the post-translational modification N6-(pyridoxal phosphate)lysine. Residues tryptophan 267 and threonine 295 each contribute to the pyridoxal 5'-phosphate site.

It belongs to the kynureninase family. As to quaternary structure, homodimer. Pyridoxal 5'-phosphate serves as cofactor.

It catalyses the reaction L-kynurenine + H2O = anthranilate + L-alanine + H(+). It carries out the reaction 3-hydroxy-L-kynurenine + H2O = 3-hydroxyanthranilate + L-alanine + H(+). Its pathway is amino-acid degradation; L-kynurenine degradation; L-alanine and anthranilate from L-kynurenine: step 1/1. It functions in the pathway cofactor biosynthesis; NAD(+) biosynthesis; quinolinate from L-kynurenine: step 2/3. Functionally, catalyzes the cleavage of L-kynurenine (L-Kyn) and L-3-hydroxykynurenine (L-3OHKyn) into anthranilic acid (AA) and 3-hydroxyanthranilic acid (3-OHAA), respectively. This chain is Kynureninase, found in Shouchella clausii (strain KSM-K16) (Alkalihalobacillus clausii).